The following is a 266-amino-acid chain: UPF0294 protein YafD (266 aa).

The protein belongs to the UPF0294 family.

Its subcellular location is the cytoplasm. This chain is UPF0294 protein YafD, found in Salmonella agona (strain SL483).